The chain runs to 662 residues: Leucine aminopeptidase 2 (662 aa).

Residues 178–180 (QLE) and 304–309 (PYGGME) each bind a peptide. Zn(2+) is bound at residue H333. E334 serves as the catalytic Proton acceptor. Zn(2+) is bound by residues H337 and E356. The active-site Proton donor is Y422.

The protein belongs to the peptidase M1 family. Zn(2+) is required as a cofactor.

Its subcellular location is the cytoplasm. It is found in the nucleus. It catalyses the reaction an epoxide + H2O = an ethanediol. Functionally, aminopeptidase that preferentially cleaves di- and tripeptides. Also has low epoxide hydrolase activity (in vitro). Can hydrolyze the epoxide leukotriene LTA(4) but it forms preferentially 5,6-dihydroxy-7,9,11,14-eicosatetraenoic acid rather than the cytokine leukotriene B(4) as the product compared to the homologous mammalian enzyme (in vitro). This is Leucine aminopeptidase 2 from Kluyveromyces lactis (strain ATCC 8585 / CBS 2359 / DSM 70799 / NBRC 1267 / NRRL Y-1140 / WM37) (Yeast).